A 329-amino-acid polypeptide reads, in one-letter code: Glycerol-3-phosphate dehydrogenase [NAD(P)+] (329 aa).

NADPH contacts are provided by Trp11, Arg30, and Lys103. Lys103, Gly132, and Ser134 together coordinate sn-glycerol 3-phosphate. Ala136 contacts NADPH. Lys187, Asp240, Ser250, Arg251, and Asn252 together coordinate sn-glycerol 3-phosphate. The active-site Proton acceptor is Lys187. Residue Arg251 coordinates NADPH. The NADPH site is built by Val275 and Glu277.

The protein belongs to the NAD-dependent glycerol-3-phosphate dehydrogenase family.

The protein resides in the cytoplasm. The catalysed reaction is sn-glycerol 3-phosphate + NAD(+) = dihydroxyacetone phosphate + NADH + H(+). It catalyses the reaction sn-glycerol 3-phosphate + NADP(+) = dihydroxyacetone phosphate + NADPH + H(+). Its pathway is membrane lipid metabolism; glycerophospholipid metabolism. In terms of biological role, catalyzes the reduction of the glycolytic intermediate dihydroxyacetone phosphate (DHAP) to sn-glycerol 3-phosphate (G3P), the key precursor for phospholipid synthesis. This chain is Glycerol-3-phosphate dehydrogenase [NAD(P)+], found in Nitrosomonas europaea (strain ATCC 19718 / CIP 103999 / KCTC 2705 / NBRC 14298).